Reading from the N-terminus, the 369-residue chain is UDP-N-acetylglucosamine--N-acetylmuramyl-(pentapeptide) pyrophosphoryl-undecaprenol N-acetylglucosamine transferase (369 aa).

Residues 10-12, asparagine 124, arginine 166, serine 196, and glutamine 300 each bind UDP-N-acetyl-alpha-D-glucosamine; that span reads TGG.

It belongs to the glycosyltransferase 28 family. MurG subfamily.

The protein localises to the cell membrane. It catalyses the reaction di-trans,octa-cis-undecaprenyl diphospho-N-acetyl-alpha-D-muramoyl-L-alanyl-D-glutamyl-meso-2,6-diaminopimeloyl-D-alanyl-D-alanine + UDP-N-acetyl-alpha-D-glucosamine = di-trans,octa-cis-undecaprenyl diphospho-[N-acetyl-alpha-D-glucosaminyl-(1-&gt;4)]-N-acetyl-alpha-D-muramoyl-L-alanyl-D-glutamyl-meso-2,6-diaminopimeloyl-D-alanyl-D-alanine + UDP + H(+). The protein operates within cell wall biogenesis; peptidoglycan biosynthesis. Its function is as follows. Cell wall formation. Catalyzes the transfer of a GlcNAc subunit on undecaprenyl-pyrophosphoryl-MurNAc-pentapeptide (lipid intermediate I) to form undecaprenyl-pyrophosphoryl-MurNAc-(pentapeptide)GlcNAc (lipid intermediate II). The protein is UDP-N-acetylglucosamine--N-acetylmuramyl-(pentapeptide) pyrophosphoryl-undecaprenol N-acetylglucosamine transferase of Desulfitobacterium hafniense (strain DSM 10664 / DCB-2).